A 406-amino-acid chain; its full sequence is NADH-quinone oxidoreductase subunit D (406 aa).

It belongs to the complex I 49 kDa subunit family. NDH-1 is composed of 14 different subunits. Subunits NuoB, C, D, E, F, and G constitute the peripheral sector of the complex.

It localises to the cell inner membrane. It catalyses the reaction a quinone + NADH + 5 H(+)(in) = a quinol + NAD(+) + 4 H(+)(out). Its function is as follows. NDH-1 shuttles electrons from NADH, via FMN and iron-sulfur (Fe-S) centers, to quinones in the respiratory chain. The immediate electron acceptor for the enzyme in this species is believed to be ubiquinone. Couples the redox reaction to proton translocation (for every two electrons transferred, four hydrogen ions are translocated across the cytoplasmic membrane), and thus conserves the redox energy in a proton gradient. The polypeptide is NADH-quinone oxidoreductase subunit D (Rhizorhabdus wittichii (strain DSM 6014 / CCUG 31198 / JCM 15750 / NBRC 105917 / EY 4224 / RW1) (Sphingomonas wittichii)).